The sequence spans 629 residues: (-)-alpha pinene synthase 1, chloroplastic (629 aa).

The N-terminal 48 residues, 1–48 (MSPVSVISLPSDLCLPTSFIDRSGRELNPLHITIPNVAMRRQGKLMTR), are a transit peptide targeting the chloroplast. The Mg(2+) site is built by Asp-380, Asp-384, and Asp-532. The DDXXD motif motif lies at 380 to 384 (DDMYD).

Belongs to the terpene synthase family. Tpsd subfamily. Mg(2+) serves as cofactor. It depends on Mn(2+) as a cofactor.

The protein resides in the plastid. It localises to the chloroplast. It carries out the reaction (2E)-geranyl diphosphate = (1S,5S)-alpha-pinene + diphosphate. The catalysed reaction is (2E)-geranyl diphosphate = (1S,5S)-beta-pinene + diphosphate. It functions in the pathway terpene metabolism; oleoresin biosynthesis. It participates in secondary metabolite biosynthesis; terpenoid biosynthesis. Monoterpene synthase (TPS) involved in the biosynthesis of monoterpene natural products included in conifer oleoresin secretions and volatile emissions; these compounds contribute to biotic and abiotic stress defense against herbivores and pathogens. Catalyzes the conversion of (2E)-geranyl diphosphate (GPP) to (-)-alpha-pinene and, to a lower extent, to (-)-beta-pinene. The protein is (-)-alpha pinene synthase 1, chloroplastic of Pinus contorta (Shore pine).